Here is a 338-residue protein sequence, read N- to C-terminus: Arginine N-succinyltransferase subunit alpha (338 aa).

Belongs to the succinylarginine dihydrolase family. As to quaternary structure, heterotetramer of two alpha and two beta subunits.

The catalysed reaction is succinyl-CoA + L-arginine = N(2)-succinyl-L-arginine + CoA + H(+). It participates in amino-acid degradation; L-arginine degradation via AST pathway; L-glutamate and succinate from L-arginine: step 1/5. Catalyzes the transfer of succinyl-CoA to arginine to produce N(2)-succinylarginine. Also acts on L-ornithine. This chain is Arginine N-succinyltransferase subunit alpha (astA), found in Pseudomonas aeruginosa (strain ATCC 15692 / DSM 22644 / CIP 104116 / JCM 14847 / LMG 12228 / 1C / PRS 101 / PAO1).